We begin with the raw amino-acid sequence, 196 residues long: Cell division protein SepF (196 aa).

The disordered stretch occupies residues 15–80 (VEDDEEFNEP…PKRSASTFSK (66 aa)). Polar residues predominate over residues 56 to 79 (RPAQSTPKPQAQTAAPKRSASTFS).

This sequence belongs to the SepF family. In terms of assembly, homodimer. Interacts with FtsZ.

The protein resides in the cytoplasm. In terms of biological role, cell division protein that is part of the divisome complex and is recruited early to the Z-ring. Probably stimulates Z-ring formation, perhaps through the cross-linking of FtsZ protofilaments. Its function overlaps with FtsA. This is Cell division protein SepF from Lactococcus lactis subsp. cremoris (strain SK11).